We begin with the raw amino-acid sequence, 411 residues long: Glutamyl-tRNA reductase (411 aa).

Substrate contacts are provided by residues 49 to 52, Ser99, 104 to 106, and Gln110; these read TCNR and ENE. The active-site Nucleophile is the Cys50. 179 to 184 serves as a coordination point for NADP(+); that stretch reads GAGEAG.

Belongs to the glutamyl-tRNA reductase family. In terms of assembly, homodimer.

It carries out the reaction (S)-4-amino-5-oxopentanoate + tRNA(Glu) + NADP(+) = L-glutamyl-tRNA(Glu) + NADPH + H(+). It participates in porphyrin-containing compound metabolism; protoporphyrin-IX biosynthesis; 5-aminolevulinate from L-glutamyl-tRNA(Glu): step 1/2. In terms of biological role, catalyzes the NADPH-dependent reduction of glutamyl-tRNA(Glu) to glutamate 1-semialdehyde (GSA). This is Glutamyl-tRNA reductase from Hyperthermus butylicus (strain DSM 5456 / JCM 9403 / PLM1-5).